The following is a 473-amino-acid chain: RuvB-like helicase 2 (473 aa).

76–83 (GPPSTGKT) contributes to the ATP binding site.

The protein belongs to the RuvB family. In terms of assembly, may form heterododecamers with RVB1. Component of the SWR1 chromatin remodeling complex, the INO80 chromatin remodeling complex, and of the R2TP complex.

Its subcellular location is the nucleus. The enzyme catalyses ATP + H2O = ADP + phosphate + H(+). In terms of biological role, DNA helicase which participates in several chromatin remodeling complexes, including the SWR1 and the INO80 complexes. The SWR1 complex mediates the ATP-dependent exchange of histone H2A for the H2A variant HZT1 leading to transcriptional regulation of selected genes by chromatin remodeling. The INO80 complex remodels chromatin by shifting nucleosomes and is involved in DNA repair. Also involved in pre-rRNA processing. This is RuvB-like helicase 2 (RVB2) from Gibberella zeae (strain ATCC MYA-4620 / CBS 123657 / FGSC 9075 / NRRL 31084 / PH-1) (Wheat head blight fungus).